The chain runs to 445 residues: Proline--tRNA ligase (445 aa).

This sequence belongs to the class-II aminoacyl-tRNA synthetase family. ProS type 2 subfamily. Homodimer.

It is found in the cytoplasm. It carries out the reaction tRNA(Pro) + L-proline + ATP = L-prolyl-tRNA(Pro) + AMP + diphosphate. Catalyzes the attachment of proline to tRNA(Pro) in a two-step reaction: proline is first activated by ATP to form Pro-AMP and then transferred to the acceptor end of tRNA(Pro). The sequence is that of Proline--tRNA ligase from Caulobacter sp. (strain K31).